Consider the following 166-residue polypeptide: NADH-quinone oxidoreductase subunit I (166 aa).

2 consecutive 4Fe-4S ferredoxin-type domains span residues 57-87 (LRRY…IESE) and 97-126 (TRYD…VTPI). [4Fe-4S] cluster is bound by residues Cys67, Cys70, Cys73, Cys77, Cys106, Cys109, Cys112, and Cys116.

It belongs to the complex I 23 kDa subunit family. NDH-1 is composed of 14 different subunits. Subunits NuoA, H, J, K, L, M, N constitute the membrane sector of the complex. The cofactor is [4Fe-4S] cluster.

The protein resides in the cell inner membrane. It carries out the reaction a quinone + NADH + 5 H(+)(in) = a quinol + NAD(+) + 4 H(+)(out). Its function is as follows. NDH-1 shuttles electrons from NADH, via FMN and iron-sulfur (Fe-S) centers, to quinones in the respiratory chain. The immediate electron acceptor for the enzyme in this species is believed to be ubiquinone. Couples the redox reaction to proton translocation (for every two electrons transferred, four hydrogen ions are translocated across the cytoplasmic membrane), and thus conserves the redox energy in a proton gradient. The chain is NADH-quinone oxidoreductase subunit I from Legionella pneumophila (strain Lens).